The chain runs to 149 residues: uncharacterized protein (149 aa).

Residues 130–144 show a composition bias toward basic and acidic residues; that stretch reads ESNVTKENIEIKEEK. Positions 130-149 are disordered; that stretch reads ESNVTKENIEIKEEKEENSE.

This is an uncharacterized protein from Methanocaldococcus jannaschii (strain ATCC 43067 / DSM 2661 / JAL-1 / JCM 10045 / NBRC 100440) (Methanococcus jannaschii).